The primary structure comprises 112 residues: Conotoxin vil14.5 (112 aa).

The N-terminal stretch at 1–22 (MGFRVLVLVVMATTSALPFTFS) is a signal peptide. Positions 23–85 (EEPGRSPFRP…FAELSVGQRR (63 aa)) are excised as a propeptide. The tract at residues 53 to 74 (RADGQPPDMRQPEMRRPEVRQP) is disordered. Residues 62–74 (RQPEMRRPEVRQP) show a composition bias toward basic and acidic residues. 2 cysteine pairs are disulfide-bonded: cysteine 91/cysteine 111 and cysteine 95/cysteine 107.

It belongs to the conotoxin R superfamily. In terms of tissue distribution, expressed by the venom duct.

It localises to the secreted. The chain is Conotoxin vil14.5 from Conus villepinii (Villepin's cone).